The primary structure comprises 309 residues: Hydroxyacylglutathione hydrolase, mitochondrial (309 aa).

The N-terminal 24 residues, 1-24 (MVLGRGSLCLRSLSALGATCARRG), are a transit peptide targeting the mitochondrion. Residue Lys90 is modified to N6-acetyllysine. Residues His103, His105, Asp107, and His108 each contribute to the Zn(2+) site. Lys117 is modified (N6-acetyllysine). Zn(2+)-binding residues include His159 and Asp183. Substrate is bound by residues 192–194 (KFY) and 222–224 (HEY). His222 is a binding site for Zn(2+). N6-acetyllysine; alternate is present on Lys230. The residue at position 230 (Lys230) is an N6-succinyllysine; alternate. Substrate is bound at residue 298–301 (RREK).

This sequence belongs to the metallo-beta-lactamase superfamily. Glyoxalase II family. As to quaternary structure, monomer. Zn(2+) serves as cofactor.

It localises to the mitochondrion matrix. Its subcellular location is the cytoplasm. It catalyses the reaction an S-(2-hydroxyacyl)glutathione + H2O = a 2-hydroxy carboxylate + glutathione + H(+). The enzyme catalyses (R)-S-lactoylglutathione + H2O = (R)-lactate + glutathione + H(+). It functions in the pathway secondary metabolite metabolism; methylglyoxal degradation; (R)-lactate from methylglyoxal: step 2/2. Thiolesterase that catalyzes the hydrolysis of S-D-lactoyl-glutathione to form glutathione and D-lactic acid. This Mus musculus (Mouse) protein is Hydroxyacylglutathione hydrolase, mitochondrial (Hagh).